The sequence spans 227 residues: Ion-translocating oxidoreductase complex subunit E (227 aa).

A run of 6 helical transmembrane segments spans residues 18 to 38, 39 to 59, 69 to 89, 93 to 113, 125 to 145, and 182 to 202; these read ALVQ…VTNA, LGLG…VSLV, IPVF…LMNA, GLYL…IIIG, LPAV…LVLL, and HFLL…LIAL.

The protein belongs to the NqrDE/RnfAE family. In terms of assembly, the complex is composed of six subunits: RnfA, RnfB, RnfC, RnfD, RnfE and RnfG.

It localises to the cell inner membrane. Its function is as follows. Part of a membrane-bound complex that couples electron transfer with translocation of ions across the membrane. The chain is Ion-translocating oxidoreductase complex subunit E from Aliivibrio fischeri (strain ATCC 700601 / ES114) (Vibrio fischeri).